Consider the following 397-residue polypeptide: Enoyl-[acyl-carrier-protein] reductase [NADH] (397 aa).

NAD(+) is bound by residues 48–53 (GASTGY), 74–75 (LE), 111–112 (DA), and 139–140 (LA). Residue Tyr-225 participates in substrate binding. Tyr-235 serves as the catalytic Proton donor. Residues Lys-244 and 273 to 275 (VVT) each bind NAD(+).

This sequence belongs to the TER reductase family. In terms of assembly, monomer.

The enzyme catalyses a 2,3-saturated acyl-[ACP] + NAD(+) = a (2E)-enoyl-[ACP] + NADH + H(+). It participates in lipid metabolism; fatty acid biosynthesis. Its function is as follows. Involved in the final reduction of the elongation cycle of fatty acid synthesis (FAS II). Catalyzes the reduction of a carbon-carbon double bond in an enoyl moiety that is covalently linked to an acyl carrier protein (ACP). This is Enoyl-[acyl-carrier-protein] reductase [NADH] from Tolumonas auensis (strain DSM 9187 / NBRC 110442 / TA 4).